The primary structure comprises 308 residues: 2-dehydro-3-deoxy-phosphogluconate/2-dehydro-3-deoxy-6-phosphogalactonate aldolase (308 aa).

Residues 57–58 (TT), 144–146 (YNY), and 169–171 (KDT) contribute to the substrate site. K169 acts as the Schiff-base intermediate with substrate in catalysis.

It belongs to the DapA family. KDPG aldolase subfamily. As to quaternary structure, homotetramer; dimer of dimers.

It carries out the reaction 2-dehydro-3-deoxy-6-phospho-D-gluconate = D-glyceraldehyde 3-phosphate + pyruvate. The catalysed reaction is 2-dehydro-3-deoxy-6-phospho-D-galactonate = D-glyceraldehyde 3-phosphate + pyruvate. Its pathway is carbohydrate acid metabolism; 2-dehydro-3-deoxy-D-gluconate degradation; D-glyceraldehyde 3-phosphate and pyruvate from 2-dehydro-3-deoxy-D-gluconate: step 2/2. Involved in the degradation of glucose and galactose via the Entner-Doudoroff pathway. Catalyzes the reversible cleavage of 2-keto-3-deoxy-6-phosphogluconate (KDPG) and 2-keto-3-deoxygluconate (KDG) forming pyruvate and glyceraldehyde 3-phosphate or glyceraldehyde, respectively. It is also able to catalyze the reversible cleavage of 2-keto-3-deoxy-6-phosphogalactonate (KDPGal) and 2-keto-3-deoxygalactonate (KDGal). This is 2-dehydro-3-deoxy-phosphogluconate/2-dehydro-3-deoxy-6-phosphogalactonate aldolase (eda) from Saccharolobus solfataricus (strain ATCC 35092 / DSM 1617 / JCM 11322 / P2) (Sulfolobus solfataricus).